The following is a 300-amino-acid chain: uncharacterized protein (300 aa).

The N-terminal stretch at 1–22 (MKSFVWTLLGALSLGSLTTAYG) is a signal peptide.

It is found in the endoplasmic reticulum. This is an uncharacterized protein from Schizosaccharomyces pombe (strain 972 / ATCC 24843) (Fission yeast).